Consider the following 499-residue polypeptide: Aspartyl/glutamyl-tRNA(Asn/Gln) amidotransferase subunit B (499 aa).

The protein belongs to the GatB/GatE family. GatB subfamily. In terms of assembly, heterotrimer of A, B and C subunits.

It catalyses the reaction L-glutamyl-tRNA(Gln) + L-glutamine + ATP + H2O = L-glutaminyl-tRNA(Gln) + L-glutamate + ADP + phosphate + H(+). The catalysed reaction is L-aspartyl-tRNA(Asn) + L-glutamine + ATP + H2O = L-asparaginyl-tRNA(Asn) + L-glutamate + ADP + phosphate + 2 H(+). Allows the formation of correctly charged Asn-tRNA(Asn) or Gln-tRNA(Gln) through the transamidation of misacylated Asp-tRNA(Asn) or Glu-tRNA(Gln) in organisms which lack either or both of asparaginyl-tRNA or glutaminyl-tRNA synthetases. The reaction takes place in the presence of glutamine and ATP through an activated phospho-Asp-tRNA(Asn) or phospho-Glu-tRNA(Gln). This Bartonella bacilliformis (strain ATCC 35685 / KC583 / Herrer 020/F12,63) protein is Aspartyl/glutamyl-tRNA(Asn/Gln) amidotransferase subunit B.